The chain runs to 227 residues: DNA repair protein RecO (227 aa).

It belongs to the RecO family.

Its function is as follows. Involved in DNA repair and RecF pathway recombination. The chain is DNA repair protein RecO from Pseudomonas putida (strain ATCC 47054 / DSM 6125 / CFBP 8728 / NCIMB 11950 / KT2440).